The sequence spans 343 residues: Probable xyloglucan endotransglucosylase/hydrolase protein 30 (343 aa).

The signal sequence occupies residues 1-23; it reads MSKSSYNHIFILILCLCLRSSSA. One can recognise a GH16 domain in the interval 24–224; sequence FTNLNTLSFE…YKFAPFVAEF (201 aa). Glu109 (nucleophile) is an active-site residue. Residue Glu113 is the Proton donor of the active site. Xyloglucan-binding positions include Glu113 and 126–128; that span reads QTN. A glycan (N-linked (GlcNAc...) asparagine) is linked at Asn132. Residues 136-140, 203-204, Gly208, and Arg285 contribute to the xyloglucan site; these read HRGRE and DW. A disulfide bond links Cys280 and Cys293. A disordered region spans residues 306 to 343; sequence TGRLKFGGTEARERRRNRRQQRRPEIEIESDPDDRKLL.

This sequence belongs to the glycosyl hydrolase 16 family. XTH group 3 subfamily. Contains at least one intrachain disulfide bond essential for its enzymatic activity. In terms of tissue distribution, predominantly expressed in green siliques.

It is found in the secreted. It localises to the cell wall. The protein localises to the extracellular space. Its subcellular location is the apoplast. It carries out the reaction breaks a beta-(1-&gt;4) bond in the backbone of a xyloglucan and transfers the xyloglucanyl segment on to O-4 of the non-reducing terminal glucose residue of an acceptor, which can be a xyloglucan or an oligosaccharide of xyloglucan.. Functionally, catalyzes xyloglucan endohydrolysis (XEH) and/or endotransglycosylation (XET). Cleaves and religates xyloglucan polymers, an essential constituent of the primary cell wall, and thereby participates in cell wall construction of growing tissues. This Arabidopsis thaliana (Mouse-ear cress) protein is Probable xyloglucan endotransglucosylase/hydrolase protein 30 (XTH30).